We begin with the raw amino-acid sequence, 188 residues long: MSSGHLFQWHLCDVFKSAMCCISCTHTLSLLLCVLTLTSAATGAGPETLCGAELVDTLQFVCGERGFYFSKPTGYGPSSRRSHNRGIVDECCFQSCELRRLEMYCAPVKSGKAARSVRAQRHTDMPRTPKVSTAVQNVDRGTERRTAQHPDKTKPKKKPLSGNSHTSCKEVHQKNSSRGNTGGRNYRM.

Residues 45-73 (GPETLCGAELVDTLQFVCGERGFYFSKPT) form a b region. 3 disulfides stabilise this stretch: C50–C92, C62–C105, and C91–C96. Residues 74–85 (GYGPSSRRSHNR) are c. Residues 86-106 (GIVDECCFQSCELRRLEMYCA) are a. The d stretch occupies residues 107–114 (PVKSGKAA). Positions 115-188 (RSVRAQRHTD…GNTGGRNYRM (74 aa)) are cleaved as a propeptide — e peptide. Positions 115-188 (RSVRAQRHTD…GNTGGRNYRM (74 aa)) are disordered. The segment covering 140-153 (RGTERRTAQHPDKT) has biased composition (basic and acidic residues).

It belongs to the insulin family. In terms of tissue distribution, all the isoforms are expressed in embryos, juvenile and adult liver, muscle and brain. At least one isoform is expressed in heart, kidney, testes, ovary, adipose tissue and spleen of juvenile salmon.

The protein localises to the secreted. In terms of biological role, the insulin-like growth factors, isolated from plasma, are structurally and functionally related to insulin but have a much higher growth-promoting activity. Acts as a ligand for IGF1R. Binds to the alpha subunit of IGF1R, leading to the activation of the intrinsic tyrosine kinase activity which autophosphorylates tyrosine residues in the beta subunit thus initiatiating a cascade of down-stream signaling events leading to activation of the PI3K-AKT/PKB and the Ras-MAPK pathways. Binds to integrins. Its binding to integrins and subsequent ternary complex formation with integrins and IGFR1 are essential for IGF1 signaling. This Oncorhynchus kisutch (Coho salmon) protein is Insulin-like growth factor 1.